The primary structure comprises 91 residues: Acylphosphatase (91 aa).

The region spanning 5 to 91 is the Acylphosphatase-like domain; sequence CLHAYVGGRV…QGIAGFIVRR (87 aa). Catalysis depends on residues arginine 20 and asparagine 38.

The protein belongs to the acylphosphatase family.

The catalysed reaction is an acyl phosphate + H2O = a carboxylate + phosphate + H(+). The sequence is that of Acylphosphatase (acyP) from Pseudomonas paraeruginosa (strain DSM 24068 / PA7) (Pseudomonas aeruginosa (strain PA7)).